The sequence spans 323 residues: GMP reductase (323 aa).

C174 serves as the catalytic Thioimidate intermediate. 203 to 226 (IIADGGIRHNGDIAKSVRFGASMV) serves as a coordination point for NADP(+).

This sequence belongs to the IMPDH/GMPR family. GuaC type 2 subfamily.

It catalyses the reaction IMP + NH4(+) + NADP(+) = GMP + NADPH + 2 H(+). Functionally, catalyzes the irreversible NADPH-dependent deamination of GMP to IMP. It functions in the conversion of nucleobase, nucleoside and nucleotide derivatives of G to A nucleotides, and in maintaining the intracellular balance of A and G nucleotides. This Oenococcus oeni (strain ATCC BAA-331 / PSU-1) protein is GMP reductase.